We begin with the raw amino-acid sequence, 228 residues long: Cytochrome c oxidase subunit 2 (228 aa).

Residues 1 to 26 (MATWANLGLQNSSSPLMEQLNFFHDH) are Mitochondrial intermembrane-facing. The helical transmembrane segment at 27-48 (TVLILIMITVMITYVMGMLFFN) threads the bilayer. The Mitochondrial matrix segment spans residues 49–62 (KFTNRYLLHGQTIE). Residues 63–82 (IIWTILPAIILMFIAFPSLR) traverse the membrane as a helical segment. Residues 83–228 (LLYLLDEINS…FIKWVSSQLN (146 aa)) are Mitochondrial intermembrane-facing. Cu cation is bound by residues His161, Cys196, Glu198, Cys200, His204, and Met207. Residue Glu198 participates in Mg(2+) binding.

This sequence belongs to the cytochrome c oxidase subunit 2 family. In terms of assembly, component of the cytochrome c oxidase (complex IV, CIV), a multisubunit enzyme composed of a catalytic core of 3 subunits and several supernumerary subunits. The complex exists as a monomer or a dimer and forms supercomplexes (SCs) in the inner mitochondrial membrane with ubiquinol-cytochrome c oxidoreductase (cytochrome b-c1 complex, complex III, CIII). Cu cation is required as a cofactor.

Its subcellular location is the mitochondrion inner membrane. The catalysed reaction is 4 Fe(II)-[cytochrome c] + O2 + 8 H(+)(in) = 4 Fe(III)-[cytochrome c] + 2 H2O + 4 H(+)(out). Its function is as follows. Component of the cytochrome c oxidase, the last enzyme in the mitochondrial electron transport chain which drives oxidative phosphorylation. The respiratory chain contains 3 multisubunit complexes succinate dehydrogenase (complex II, CII), ubiquinol-cytochrome c oxidoreductase (cytochrome b-c1 complex, complex III, CIII) and cytochrome c oxidase (complex IV, CIV), that cooperate to transfer electrons derived from NADH and succinate to molecular oxygen, creating an electrochemical gradient over the inner membrane that drives transmembrane transport and the ATP synthase. Cytochrome c oxidase is the component of the respiratory chain that catalyzes the reduction of oxygen to water. Electrons originating from reduced cytochrome c in the intermembrane space (IMS) are transferred via the dinuclear copper A center (CU(A)) of subunit 2 and heme A of subunit 1 to the active site in subunit 1, a binuclear center (BNC) formed by heme A3 and copper B (CU(B)). The BNC reduces molecular oxygen to 2 water molecules using 4 electrons from cytochrome c in the IMS and 4 protons from the mitochondrial matrix. The polypeptide is Cytochrome c oxidase subunit 2 (COII) (Culex quinquefasciatus (Southern house mosquito)).